A 172-amino-acid chain; its full sequence is Large ribosomal subunit protein bL17 (172 aa).

Residues 123-172 (ATGSKRAQTEEAASQEPAAEAGKQPAEGATSVQTAEAADASQAEGEAEEK) form a disordered region. Residues 132 to 143 (EEAASQEPAAEA) show a composition bias toward low complexity.

It belongs to the bacterial ribosomal protein bL17 family. In terms of assembly, part of the 50S ribosomal subunit. Contacts protein L32.

This Thermobifida fusca (strain YX) protein is Large ribosomal subunit protein bL17.